A 1087-amino-acid polypeptide reads, in one-letter code: Synaptopodin-2 (1087 aa).

The PDZ domain occupies 6–88; the sequence is FICISMTGGA…SLHLLVKRPS (83 aa). Disordered regions lie at residues 24–52, 88–112, and 207–272; these read GKEEQQPLQVAKIRSQSKASGSGLREGDE, SSGTSETLDSESETTNHQHLTHEGP, and GPIV…AGLP. A compositionally biased stretch (basic and acidic residues) spans 101-112; the sequence is TTNHQHLTHEGP. Polar residues-rich tracts occupy residues 207–230 and 246–255; these read GPIVTLQGNDKSTSPDPDWSSQLE and TSLTSSTSSG. Phosphoserine occurs at positions 300, 319, and 320. Positions 320-359 are disordered; it reads SEGTEHGEDQRSGKDQSRPHKHRARHARLRRSESLSEKQV. The segment covering 322–337 has biased composition (basic and acidic residues); the sequence is GTEHGEDQRSGKDQSR. At T323 the chain carries Phosphothreonine. Residues 338-348 are compositionally biased toward basic residues; the sequence is PHKHRARHARL. Residues 349–359 are compositionally biased toward basic and acidic residues; sequence RRSESLSEKQV. A Nuclear localization signal motif is present at residues 388–396; that stretch reads KKRRRRARK. Phosphoserine occurs at positions 540, 541, 543, and 546. The segment at 551–557 is interaction with YWHAB; the sequence is RSLASVP. The residue at position 555 (S555) is a Phosphoserine; by PKA. 2 disordered regions span residues 581 to 817 and 832 to 863; these read AKPF…ALNL and NYTPKPSAPTPLVNAAPAGAGGPSNELPGMSG. S596 is subject to Phosphoserine. The segment at 599-804 is interaction with YWHAB; it reads RSVTSPISDF…AVSSIKIAQP (206 aa). Position 602 is a phosphothreonine; by PKA and CaMK2 (T602). S603 carries the post-translational modification Phosphoserine. Composition is skewed to pro residues over residues 609-622 and 636-647; these read PAPPPYSAVSPPPE and AQPPPWPQPAPW. A PPPY motif motif is present at residues 611–614; it reads PPPY. Residue Y614 is modified to Phosphotyrosine. S618 carries the phosphoserine modification. Positions 656–796 are F-actin binding; the sequence is SEQIASRDER…PPNPPQVTAV (141 aa). The F-actin bundling activity stretch occupies residues 656–909; it reads SEQIASRDER…LPASWKYSSN (254 aa). Interaction with ACTN2 stretches follow at residues 656-917 and 894-1087; these read SEQI…PPVA and QSPT…VVEE. Phosphoserine occurs at positions 697 and 719. An actin binding region spans residues 740 to 893; it reads AKQKTPPPVA…DTVQAHTVRA (154 aa). Position 744 is a phosphothreonine (T744). A compositionally biased stretch (low complexity) spans 751 to 777; it reads KPAVKSPSSSQPVAPVSPVWSPGVAPA. S767 and S771 each carry phosphoserine. Positions 781–797 are enriched in polar residues; it reads AFSTSNPPNPPQVTAVS. Residues 803–1087 form an interaction with FLNC region; it reads QPAAPPARPA…QVWKPSVVEE (285 aa). Residues S895, S899, and S903 each carry the phosphoserine modification. 3 disordered regions span residues 930 to 952, 970 to 1012, and 1037 to 1060; these read AIKSQPPGAQASKTSKKKGKKPL, FTFQ…PTNA, and PVSASPVPVSVPTSPKQESTSTSY. The segment at 993–1012 is interaction with ZYX; sequence PAMKQALPPRQANVGSPTNA. 2 positions are modified to phosphoserine: S1008 and S1050. Residues 1037–1051 show a composition bias toward low complexity; it reads PVSASPVPVSVPTSP.

It belongs to the synaptopodin family. As to quaternary structure, may self-associate in muscle cells under oxidative stress. Binds F-actin. Interacts with ACTN2; ACTN2 is proposed to anchor SYOP2 at Z lines in mature myocytes. Interacts with AKAP6, PPP3CA and CAMK2A. Interacts (phosphorylated form) with YWHAB; YWHAB competes with ACTN2 for interaction with SYNPO2. Interacts with KPNA2; mediating nuclear import of SYNOP2; dependent on interaction with YWHAB. Interacts with IPO13; may be implicated in SYNOP2 nuclear import. Interacts with ZYX, FLNC, ILK. Interacts with BAG3 (via WW 1 domain). May associate with the CASA complex consisting of HSPA8, HSPB8 and BAG3. Interacts with VPS18. In terms of processing, phosphorylated by PKA, and by CaMK2 at multiple sites. Dephosphorylated by calcineurin at Ser-555 and Thr-602; abrogating interaction with YWHAB and impairing nuclear import. As to expression, expressed in skeletal muscle, heart, colon, stomach, uterus and lung. Expression is restricted to muscle cell layers in colon, uterus and stomach.

The protein localises to the nucleus. Its subcellular location is the cytoplasm. It localises to the myofibril. The protein resides in the sarcomere. It is found in the z line. The protein localises to the cell junction. Its subcellular location is the focal adhesion. Its function is as follows. Has an actin-binding and actin-bundling activity. Can induce the formation of F-actin networks. At the sarcomeric Z lines is proposed to act as adapter protein that links nascent myofibers to the sarcolemma via ZYX and may play a role in early assembly and stabilization of the Z lines. Involved in autophagosome formation. May play a role in chaperone-assisted selective autophagy (CASA) involved in Z lines maintenance in striated muscle under mechanical tension; may link the client-processing CASA chaperone machinery to a membrane-tethering and fusion complex providing autophagosome membranes. Involved in regulation of cell migration. May be a tumor suppressor. This Mus musculus (Mouse) protein is Synaptopodin-2 (Synpo2).